The chain runs to 248 residues: Triosephosphate isomerase (248 aa).

9–11 (NWK) serves as a coordination point for substrate. Histidine 92 (electrophile) is an active-site residue. The Proton acceptor role is filled by glutamate 164. Substrate is bound by residues glycine 170, serine 210, and 231 to 232 (GG).

This sequence belongs to the triosephosphate isomerase family. Homodimer.

It is found in the cytoplasm. It carries out the reaction D-glyceraldehyde 3-phosphate = dihydroxyacetone phosphate. Its pathway is carbohydrate biosynthesis; gluconeogenesis. It functions in the pathway carbohydrate degradation; glycolysis; D-glyceraldehyde 3-phosphate from glycerone phosphate: step 1/1. Functionally, involved in the gluconeogenesis. Catalyzes stereospecifically the conversion of dihydroxyacetone phosphate (DHAP) to D-glyceraldehyde-3-phosphate (G3P). The sequence is that of Triosephosphate isomerase from Mycoplasma capricolum subsp. capricolum (strain California kid / ATCC 27343 / NCTC 10154).